Here is a 266-residue protein sequence, read N- to C-terminus: Bidirectional sugar transporter SWEET7b (266 aa).

Topologically, residues 1 to 9 (MVSPDLIRN) are extracellular. A helical transmembrane segment spans residues 10-30 (MVGIVGNIISFGLFLSPVPTF). Residues 10–97 (MVGIVGNIIS…TIFFLFSDKK (88 aa)) enclose the MtN3/slv 1 domain. Residues 31 to 45 (YRIIKNKDVQDFKAD) lie on the Cytoplasmic side of the membrane. A helical transmembrane segment spans residues 46–66 (PYLATLLNCMLWVFYGLPIVH). At 67–69 (PNS) the chain is on the extracellular side. Residues 70 to 90 (ILVVTINGIGLIIEAVYLTIF) traverse the membrane as a helical segment. The Cytoplasmic segment spans residues 91 to 101 (FLFSDKKNKKK). The helical transmembrane segment at 102–122 (MGVVLATEALFMAAVVLGVLL) threads the bilayer. The Extracellular portion of the chain corresponds to 123–131 (GAHTHQRRS). The chain crosses the membrane as a helical span at residues 132–152 (LIVGILCAIFGTIMYSSPLTI). The MtN3/slv 2 domain maps to 133–216 (IVGILCAIFG…LILYAIYYRT (84 aa)). The Cytoplasmic segment spans residues 153-165 (MSQVVKTKSVEYM). The helical transmembrane segment at 166 to 186 (PLLLSVVSFLNGLCWTSYALI) threads the bilayer. Over 187-189 (RLD) the chain is Extracellular. Residues 190–210 (IFITIPNGLGVLFALMQLILY) traverse the membrane as a helical segment. At 211–266 (AIYYRTTPKKQDKNLELPTVAPVAKDTSIVTPVSKDDDVVDGGNASHVTINITIEP) the chain is on the cytoplasmic side.

Belongs to the SWEET sugar transporter family. In terms of assembly, forms homooligomers and/or heterooligomers.

It is found in the cell membrane. Its function is as follows. Mediates both low-affinity uptake and efflux of sugar across the plasma membrane. The protein is Bidirectional sugar transporter SWEET7b (SWEET7B) of Oryza sativa subsp. indica (Rice).